A 727-amino-acid chain; its full sequence is Kinesin-like protein KIN-14G (727 aa).

Disordered stretches follow at residues 100–156 (QTAP…LHLR), 172–194 (HLSA…SCSR), and 336–357 (LAGG…GATR). Residues 114 to 133 (VASSTAGRASRTKSASSTGR) are compositionally biased toward polar residues. Residues 381 to 710 (NIRVFCRVRP…LRFAARVNSC (330 aa)) enclose the Kinesin motor domain. 461–468 (GQTGSGKT) is an ATP binding site.

This sequence belongs to the TRAFAC class myosin-kinesin ATPase superfamily. Kinesin family. KIN-14 subfamily.

The sequence is that of Kinesin-like protein KIN-14G from Oryza sativa subsp. japonica (Rice).